A 47-amino-acid chain; its full sequence is MTLLQVHNFVDNSGRKKWLSRTLGQTRCPGKSMGREKFVKNNCSAIS.

This chain is Protein YpaB (ypaB), found in Escherichia coli (strain K12).